A 159-amino-acid chain; its full sequence is Ribosome-binding factor A (159 aa).

The interval 127-159 (TYAGEADPYRRPAVDDAGDSADDADPAEDERPS) is disordered. The span at 142-159 (DAGDSADDADPAEDERPS) shows a compositional bias: acidic residues.

The protein belongs to the RbfA family. Monomer. Binds 30S ribosomal subunits, but not 50S ribosomal subunits or 70S ribosomes.

The protein localises to the cytoplasm. Functionally, one of several proteins that assist in the late maturation steps of the functional core of the 30S ribosomal subunit. Associates with free 30S ribosomal subunits (but not with 30S subunits that are part of 70S ribosomes or polysomes). Required for efficient processing of 16S rRNA. May interact with the 5'-terminal helix region of 16S rRNA. This Beutenbergia cavernae (strain ATCC BAA-8 / DSM 12333 / CCUG 43141 / JCM 11478 / NBRC 16432 / NCIMB 13614 / HKI 0122) protein is Ribosome-binding factor A.